A 393-amino-acid chain; its full sequence is Formate-dependent phosphoribosylglycinamide formyltransferase (393 aa).

N(1)-(5-phospho-beta-D-ribosyl)glycinamide contacts are provided by residues 22-23 (EL) and E82. Residues R114, K155, 160 to 165 (SSGKGQ), 195 to 198 (EGFI), and E203 contribute to the ATP site. Residues 119 to 308 (RLAAEELDLP…QFALHARAIL (190 aa)) form the ATP-grasp domain. Mg(2+)-binding residues include E267 and E279. N(1)-(5-phospho-beta-D-ribosyl)glycinamide contacts are provided by residues D286, K356, and 363–364 (RR).

Belongs to the PurK/PurT family. Homodimer.

The catalysed reaction is N(1)-(5-phospho-beta-D-ribosyl)glycinamide + formate + ATP = N(2)-formyl-N(1)-(5-phospho-beta-D-ribosyl)glycinamide + ADP + phosphate + H(+). The protein operates within purine metabolism; IMP biosynthesis via de novo pathway; N(2)-formyl-N(1)-(5-phospho-D-ribosyl)glycinamide from N(1)-(5-phospho-D-ribosyl)glycinamide (formate route): step 1/1. In terms of biological role, involved in the de novo purine biosynthesis. Catalyzes the transfer of formate to 5-phospho-ribosyl-glycinamide (GAR), producing 5-phospho-ribosyl-N-formylglycinamide (FGAR). Formate is provided by PurU via hydrolysis of 10-formyl-tetrahydrofolate. This Pseudomonas fluorescens (strain Pf0-1) protein is Formate-dependent phosphoribosylglycinamide formyltransferase.